Here is a 107-residue protein sequence, read N- to C-terminus: U1-lycotoxin-Ls1a (107 aa).

Positions 1 to 20 (MMKVLVVVALLVTLISYSSS) are cleaved as a signal peptide. A propeptide spanning residues 21-41 (EGIDDLEADELLSLMANEQTR) is cleaved from the precursor. Intrachain disulfides connect Cys-44-Cys-59, Cys-51-Cys-68, Cys-58-Cys-86, and Cys-70-Cys-84.

This sequence belongs to the neurotoxin 19 (CSTX) family. 04 (U1-Lctx) subfamily. In terms of tissue distribution, expressed by the venom gland.

The protein localises to the secreted. The sequence is that of U1-lycotoxin-Ls1a from Lycosa singoriensis (Wolf spider).